Consider the following 989-residue polypeptide: DNA-binding protein SMUBP-2 (989 aa).

A2 bears the N-acetylalanine mark. Residues 213 to 220 (GPPGTGKT), Q402, Y441, and E570 each bind ATP. The interval 637 to 783 (TAFEYLDDIV…KARHITVSRK (147 aa)) is SS DNA-binding. Disordered stretches follow at residues 650–717 (YTHE…GCDR), 765–818 (LRHD…GQPH), and 833–869 (LQRQQGSQAQPAKAQPGVGLHPQKTQQKKKKKETKGP). Residues 677 to 690 (EQENGQEARAAAGQ) show a composition bias toward low complexity. Residues 721–784 (IDRTEHFRAM…ARHITVSRKS (64 aa)) form the R3H domain. Basic and acidic residues predominate over residues 765–775 (LRHDSTGEGKA). 2 positions are modified to phosphoserine: S797 and S800. Low complexity predominate over residues 833–842 (LQRQQGSQAQ). The short motif at 860–864 (KKKKK) is the Nuclear localization signal element. The AN1-type zinc finger occupies 885 to 934 (IKADNTCSFAKCTASTTTLGQFCMHCSRRYCLSHHLPEIHGCGEKARAHA). Positions 891, 896, 907, 910, 915, 918, 924, and 926 each coordinate Zn(2+). The span at 954-972 (ALDPAKRAQLQRRLDKKLG) shows a compositional bias: basic and acidic residues. The tract at residues 954–989 (ALDPAKRAQLQRRLDKKLGELSSQRTSKRKEKERGT) is disordered.

It belongs to the DNA2/NAM7 helicase family. As to quaternary structure, homooligomer. Interacts with RUVBL1. Interacts with RUVBL2. Interacts with GTF3C1. Interacts with ABT1. Interacts with ribosomes. As to expression, high expression in brain and testis, moderate in heart, spleen, and kidney, and low in other tissues.

It localises to the nucleus. It is found in the cytoplasm. Its subcellular location is the cell projection. The protein localises to the axon. The catalysed reaction is ATP + H2O = ADP + phosphate + H(+). 5' to 3' helicase that unwinds RNA and DNA duplexes in an ATP-dependent reaction. Specific to 5'-phosphorylated single-stranded guanine-rich sequences. May play a role in RNA metabolism, ribosome biogenesis or initiation of translation. May play a role in regulation of transcription. Interacts with tRNA-Tyr. This Mesocricetus auratus (Golden hamster) protein is DNA-binding protein SMUBP-2 (IGHMBP2).